The chain runs to 473 residues: Psoralen synthase (473 aa).

Residues 1–17 (YFFPLFLVTIFLYKWLV) traverse the membrane as a helical segment. The interval 350–355 (TAPLLV) is substrate specificity. Position 425 (Cys-425) interacts with heme.

It belongs to the cytochrome P450 family. The cofactor is heme.

It is found in the microsome membrane. The enzyme catalyses (7S)-marmesin + reduced [NADPH--hemoprotein reductase] + O2 = psoralen + acetone + oxidized [NADPH--hemoprotein reductase] + 2 H2O + H(+). It functions in the pathway secondary metabolite biosynthesis. Involved in the biosynthesis of coumarins and furanocoumarins (FCs), natural products required for defense responses against attacks by predators with potential medical and agroindustrial usages such as anticoagulant, rodenticide and artificial vanilla substitutes. Involved in linear furanocumarin (psoralen) biosynthesis. Converts marmesin to psoralen and, with much lower affinity, 5-hydroxymarmesin to bergaptol. In Pastinaca sativa (Wild parsnip), this protein is Psoralen synthase.